The chain runs to 429 residues: Enolase 2 (429 aa).

Gln163 contacts (2R)-2-phosphoglycerate. Catalysis depends on Glu205, which acts as the Proton donor. Residues Asp242, Glu286, and Asp313 each coordinate Mg(2+). Residues Lys338, Arg367, Ser368, and Lys389 each contribute to the (2R)-2-phosphoglycerate site. The active-site Proton acceptor is Lys338.

It belongs to the enolase family. The cofactor is Mg(2+).

It is found in the cytoplasm. The protein resides in the secreted. It localises to the cell surface. It carries out the reaction (2R)-2-phosphoglycerate = phosphoenolpyruvate + H2O. The protein operates within carbohydrate degradation; glycolysis; pyruvate from D-glyceraldehyde 3-phosphate: step 4/5. Its function is as follows. Catalyzes the reversible conversion of 2-phosphoglycerate (2-PG) into phosphoenolpyruvate (PEP). It is essential for the degradation of carbohydrates via glycolysis. This is Enolase 2 from Lactiplantibacillus plantarum (strain ATCC BAA-793 / NCIMB 8826 / WCFS1) (Lactobacillus plantarum).